The sequence spans 188 residues: Deoxyuridine 5'-triphosphate nucleotidohydrolase (188 aa).

The disordered stretch occupies residues methionine 1–isoleucine 34.

This sequence belongs to the dUTPase family. Mg(2+) is required as a cofactor.

It catalyses the reaction dUTP + H2O = dUMP + diphosphate + H(+). In terms of biological role, this enzyme is involved in nucleotide metabolism: it produces dUMP, the immediate precursor of thymidine nucleotides and it decreases the intracellular concentration of dUTP so that uracil cannot be incorporated into DNA. The chain is Deoxyuridine 5'-triphosphate nucleotidohydrolase (49) from Ictaluridae (bullhead catfishes).